A 434-amino-acid polypeptide reads, in one-letter code: Glutamate-1-semialdehyde 2,1-aminomutase (434 aa).

Residue K270 is modified to N6-(pyridoxal phosphate)lysine.

The protein belongs to the class-III pyridoxal-phosphate-dependent aminotransferase family. HemL subfamily. Homodimer. The cofactor is pyridoxal 5'-phosphate.

The protein resides in the cytoplasm. The catalysed reaction is (S)-4-amino-5-oxopentanoate = 5-aminolevulinate. The protein operates within porphyrin-containing compound metabolism; protoporphyrin-IX biosynthesis; 5-aminolevulinate from L-glutamyl-tRNA(Glu): step 2/2. This chain is Glutamate-1-semialdehyde 2,1-aminomutase, found in Pelotomaculum thermopropionicum (strain DSM 13744 / JCM 10971 / SI).